The following is a 569-amino-acid chain: Oxygen-dependent choline dehydrogenase (569 aa).

Position 9–38 (9–38 (DYVIIGGGSAGSVLGNRLSEDKDKEVLVLE)) interacts with FAD. His475 acts as the Proton acceptor in catalysis.

This sequence belongs to the GMC oxidoreductase family. It depends on FAD as a cofactor.

The catalysed reaction is choline + A = betaine aldehyde + AH2. It carries out the reaction betaine aldehyde + NAD(+) + H2O = glycine betaine + NADH + 2 H(+). It functions in the pathway amine and polyamine biosynthesis; betaine biosynthesis via choline pathway; betaine aldehyde from choline (cytochrome c reductase route): step 1/1. In terms of biological role, involved in the biosynthesis of the osmoprotectant glycine betaine. Catalyzes the oxidation of choline to betaine aldehyde and betaine aldehyde to glycine betaine at the same rate. The sequence is that of Oxygen-dependent choline dehydrogenase from Staphylococcus aureus (strain COL).